We begin with the raw amino-acid sequence, 1102 residues long: Probable ubiquitin-conjugating enzyme E2 23 (1102 aa).

Disordered stretches follow at residues 1 to 20 (MEHE…DSSV), 25 to 111 (ASLS…DGNY), 396 to 418 (LPKV…PVHE), 579 to 602 (SPGN…SHQE), 661 to 710 (DESV…DIYA), and 760 to 800 (QAES…KNIL). Residues 31 to 44 (DSEHPNIYRQDIVK) are compositionally biased toward basic and acidic residues. Acidic residues predominate over residues 59–88 (GDSDSDSDISDEEEDDDDDEDNDDDDEDVE). The span at 579-596 (SPGNSFEEATQQDNGYQD) shows a compositional bias: polar residues. The span at 779-800 (SKVNVTDNCESKGTQANAKNIL) shows a compositional bias: polar residues. The region spanning 850-1010 (QWFKKVDQDW…TFLLNCKTMM (161 aa)) is the UBC core domain. The active-site Glycyl thioester intermediate is Cys936.

It belongs to the ubiquitin-conjugating enzyme family.

The enzyme catalyses S-ubiquitinyl-[E1 ubiquitin-activating enzyme]-L-cysteine + [E2 ubiquitin-conjugating enzyme]-L-cysteine = [E1 ubiquitin-activating enzyme]-L-cysteine + S-ubiquitinyl-[E2 ubiquitin-conjugating enzyme]-L-cysteine.. Its pathway is protein modification; protein ubiquitination. Functionally, accepts the ubiquitin from the E1 complex and catalyzes its covalent attachment to other proteins. This Arabidopsis thaliana (Mouse-ear cress) protein is Probable ubiquitin-conjugating enzyme E2 23 (UBC23).